The chain runs to 534 residues: Paired box protein Pax-1 (534 aa).

The segment at residues 98 to 224 (TYGEVNQLGG…SSISRILRNK (127 aa)) is a DNA-binding region (paired). A PAI subdomain region spans residues 101–157 (EVNQLGGVFVNGRPLPNAIRLRIVELAQLGIRPCDISRQLRVSHGCVSKILARYNET). The tract at residues 176 to 224 (NVVKHIRDYKQGDPGIFAWEIRDRLLADGVCDKYNVPSVSSISRILRNK) is RED subdomain. Disordered stretches follow at residues 424–480 (PSRE…AAAP) and 492–511 (EEEA…QAQP).

The protein localises to the nucleus. This protein is a transcriptional activator. It may play a role in the formation of segmented structures of the embryo. May play an important role in the normal development of the vertebral column. The protein is Paired box protein Pax-1 (PAX1) of Homo sapiens (Human).